A 152-amino-acid chain; its full sequence is UPF0266 membrane protein CKO_01158 (152 aa).

A run of 3 helical transmembrane segments spans residues 6-26, 45-65, and 67-87; these read LVLV…QFIM, VDSV…VTSH, and AQIT…IFWV.

Belongs to the UPF0266 family.

It is found in the cell inner membrane. This chain is UPF0266 membrane protein CKO_01158, found in Citrobacter koseri (strain ATCC BAA-895 / CDC 4225-83 / SGSC4696).